An 84-amino-acid polypeptide reads, in one-letter code: Large ribosomal subunit protein bL27 (84 aa).

The tract at residues 1 to 21 (MAHKKGVGSSRNGRDSDGQRL) is disordered.

The protein belongs to the bacterial ribosomal protein bL27 family.

This is Large ribosomal subunit protein bL27 from Trichlorobacter lovleyi (strain ATCC BAA-1151 / DSM 17278 / SZ) (Geobacter lovleyi).